A 1194-amino-acid chain; its full sequence is MRTNCWWRLSGYVMRHRRDLLLGFGAALAGTVIAVLVPLVTKRVIDDAIAADHRPLAPWAVVLVAAAGATYLLTYVRRYYGGRIAHLVQHDLRMDAFQALLRWDGRQQDRWSSGQLIVRTTNDLQLVQALLFDVPNVLRHVLTLLLGVAVMTWLSVPLALLAVLLVPVIGLIAHRSRRLLAAATHCAQEHKAAVTGVVDAAVCGIRVVKAFGQEERETVKLVMASRALYAAQLRVARLNAHFGPLLQTLPALGQMAVFALGGWMAAQGSITVGTFVAFWACLTLLARPACDLAGMLTIAQQARAGAVRVLELIDSRPTLVDGTKPLSLEARLSLEFQRVSFGYVADRPVLREISLSVRAGETLAVVGAPGSGKSTLASLATRCYDVTQGAVRIGGQDVRELTLDSLRSAIGLVPEDAVLFSGTIGANIAYGRPDATPEQIATAARAAHIEEFVNTLPDGYQTAVGARGLTLSGGQRQRIALARALLHQPRLLIMDDPTSAVDAVIECGIQEVLREAIADRTAVIFTRRRSMLTLADRVAVLDSGRLLDVGTPDEVWERCPRYRELLSPAPDLADDLVVAERSPVCRPVAGLGTKAAQHTNVHNPGPHDHPPGPDPLRRLLREFRGPLALSLLLVAVQTCAGLLPPLLIRHGIDVGIRRHVLSALWWAALAGTATVVIRWVVQWGSAMVAGYTGEQVLFRLRSVVFAHAQRLGLDAFEDDGDAQIVTAVTADVEAIVAFLRTGLVVAVISVVTLVGILVALLAIRARLVLLIFTTMPVLALATWQFRRASNWTYRRARHRLGTVTATLREYAAGLRIAQAFRAEYRGLQSYFAHSDDYRRLGVRGQRLLALYYPFVALLCSLATTLVLLDGAREVRAGVISVGALVTYLLYIELLYTPIGELAQMFDDYQRAAVAAGRIRSLLSTRTPSSPAARPVGTLRGEVVFDAVHYSYRTREVPALAGINLRIPAGQTVVFVGSTGSGKSTLIKLVARFYDPTHGTVRVDGCDLREFDVDGYRNRLGIVTQEQYVFAGTVRDAIAYGRPDATDAQVERAAREVGAHPMITALDNGYLHQVTAGGRNLSAGQLQLLALARARLVDPDILLLDEATVALDPATEAVVQRATLTLAARRTTLIVAHGLAIAEHADRIVVLEHGTVVEDGAHTELLAAGGHYSRLWAAHTRLCSPEITQLQCIDA.

Transmembrane regions (helical) follow at residues 20 to 40 (LLLG…VPLV), 56 to 76 (LAPW…LTYV), 130 to 150 (LLFD…GVAV), 153 to 173 (WLSV…GLIA), 258 to 278 (FALG…FVAF), and 279 to 299 (WACL…LTIA). The region spanning 21 to 301 (LLGFGAALAG…LAGMLTIAQQ (281 aa)) is the ABC transmembrane type-1 1 domain. Residues 334–568 (LEFQRVSFGY…CPRYRELLSP (235 aa)) enclose the ABC transporter 1 domain. Residue 367-374 (GAPGSGKS) coordinates ATP. 6 consecutive transmembrane segments (helical) span residues 628–648 (ALSL…PLLI), 660–680 (VLSA…IRWV), 743–763 (LVVA…LLAI), 765–785 (ARLV…TWQF), 847–867 (LLAL…TLVL), and 878–898 (VISV…YTPI). The region spanning 628–910 (ALSLLLVAVQ…LAQMFDDYQR (283 aa)) is the ABC transmembrane type-1 2 domain. Residues 942–1177 (VVFDAVHYSY…GGHYSRLWAA (236 aa)) form the ABC transporter 2 domain. 976 to 983 (GSTGSGKS) contacts ATP.

The protein belongs to the ABC transporter superfamily. Lipid exporter (TC 3.A.1.106) family.

It localises to the cell inner membrane. Overexpression increases resistance to chloramphenicol, ampicillin, streptomycin, tetracyclin and vancomycin. This is Multidrug efflux ATP-binding/permease protein BCG_0231 from Mycobacterium bovis (strain BCG / Pasteur 1173P2).